The following is a 96-amino-acid chain: 2Fe-2S ferredoxin-5 (96 aa).

The 2Fe-2S ferredoxin-type domain occupies 2-96 (PKVIVANINA…GKGDVVIYLP (95 aa)). Residues cysteine 36, cysteine 42, cysteine 45, and cysteine 81 each contribute to the [2Fe-2S] cluster site.

Belongs to the adrenodoxin/putidaredoxin family. It depends on [2Fe-2S] cluster as a cofactor.

Functionally, may be involved in the assembly of iron-sulfur clusters (Isc-Fd). The chain is 2Fe-2S ferredoxin-5 (fdx5) from Aquifex aeolicus (strain VF5).